A 168-amino-acid chain; its full sequence is T-cell surface glycoprotein CD3 delta chain (168 aa).

A signal peptide spans 1 to 21; that stretch reads MEHSRFLSCLILAALLSQVNP. Topologically, residues 22–102 are extracellular; sequence RILKVLEPED…CVELDTATLA (81 aa). Cysteines 37 and 74 form a disulfide. N-linked (GlcNAc...) asparagine glycosylation is found at Asn-38 and Asn-56. Residues 103–123 form a helical membrane-spanning segment; sequence GMIITDIIATVLLALGVYCFA. Residues 124–168 are Cytoplasmic-facing; that stretch reads GHETGRFSRAADTQALMGNDQLYQPLRERNDAQYSRLGDKWARNK. In terms of domain architecture, ITAM spans 135–163; the sequence is DTQALMGNDQLYQPLRERNDAQYSRLGDK. Tyr-146 and Tyr-157 each carry phosphotyrosine.

In terms of assembly, the TCR-CD3 complex is composed of a CD3D/CD3E and a CD3G/CD3E heterodimers that preferentially associate with TCRalpha and TCRbeta, respectively, to form TCRalpha/CD3E/CD3G and TCRbeta/CD3G/CD3E trimers. In turn, the hexamer interacts with CD3Z homodimer to form the TCR-CD3 complex. Alternatively, TCRalpha and TCRbeta can be replaced by TCRgamma and TCRdelta. Interacts with coreceptors CD4 and CD8. Post-translationally, phosphorylated on Tyr residues after T-cell receptor triggering by LCK in association with CD4/CD8. CD3D is mostly present on T-lymphocytes with its TCR-CD3 partners. Present also in fetal NK-cells.

The protein resides in the cell membrane. Part of the TCR-CD3 complex present on T-lymphocyte cell surface that plays an essential role in adaptive immune response. When antigen presenting cells (APCs) activate T-cell receptor (TCR), TCR-mediated signals are transmitted across the cell membrane by the CD3 chains CD3D, CD3E, CD3G and CD3Z. All CD3 chains contain immunoreceptor tyrosine-based activation motifs (ITAMs) in their cytoplasmic domain. Upon TCR engagement, these motifs become phosphorylated by Src family protein tyrosine kinases LCK and FYN, resulting in the activation of downstream signaling pathways. In addition of this role of signal transduction in T-cell activation, CD3D plays an essential role in thymocyte differentiation. Indeed, participates in correct intracellular TCR-CD3 complex assembly and surface expression. In absence of a functional TCR-CD3 complex, thymocytes are unable to differentiate properly. Interacts with CD4 and CD8 and thus serves to establish a functional link between the TCR and coreceptors CD4 and CD8, which is needed for activation and positive selection of CD4 or CD8 T-cells. The chain is T-cell surface glycoprotein CD3 delta chain (CD3D) from Bos taurus (Bovine).